Here is a 226-residue protein sequence, read N- to C-terminus: MLLHIPGLFDADELARIREALEQADWADGKATAGYQSAKAKHNLQLPEGHALAKEIGSALIDRLWKNPRFMSAALPHKVFPPLINCYREGGNFGFHIDNALRQPKGSPERVRTDLSSTLFLSDPDSYDGGELVIQDTYGEQQVKLAAGDLVLYPGTSLHKVNPVTRGVRYAAFFWTQSLVREDSQRALLFEMDNAIQQLTADVPEHPSLLQLTGTYHNLLRRWAEV.

The region spanning 78 to 178 is the Fe2OG dioxygenase domain; that stretch reads KVFPPLINCY…RYAAFFWTQS (101 aa). Fe cation-binding residues include His96, Asp98, and His159. Arg169 is a 2-oxoglutarate binding site.

Requires Fe(2+) as cofactor. L-ascorbate serves as cofactor.

In Pseudomonas putida (strain W619), this protein is PKHD-type hydroxylase PputW619_4316.